The following is a 1040-amino-acid chain: Multidrug resistance protein MdtB (1040 aa).

Helical transmembrane passes span 16 to 36 (FIMR…AGII), 347 to 367 (LMMA…NIPA), 369 to 389 (IIPG…MVFL), 396 to 416 (LTLM…IVVI), 440 to 460 (IGFT…PLLF), 472 to 492 (FAIT…TLTP), 537 to 557 (WLTL…WVFI), 863 to 883 (LGST…VLGI), 888 to 908 (FIHP…ALLA), 911 to 931 (IAGS…IGIV), 968 to 988 (ILMT…STGV), and 998 to 1018 (IGMV…TPVI).

It belongs to the resistance-nodulation-cell division (RND) (TC 2.A.6) family. MdtB subfamily. In terms of assembly, part of a tripartite efflux system composed of MdtA, MdtB and MdtC. MdtB forms a heteromultimer with MdtC.

It localises to the cell inner membrane. The MdtABC tripartite complex confers resistance against novobiocin and deoxycholate. In Escherichia coli O157:H7 (strain EC4115 / EHEC), this protein is Multidrug resistance protein MdtB.